The chain runs to 248 residues: Ribonuclease 3 (248 aa).

The RNase III domain occupies 6–136 (LAYLQTLIGS…LIGAIYLDKG (131 aa)). Glu-49 serves as a coordination point for Mg(2+). Asp-53 is a catalytic residue. Positions 122 and 125 each coordinate Mg(2+). Residue Glu-125 is part of the active site. Residues 163-231 (NYKSCLIEYS…AKEAMERIIA (69 aa)) form the DRBM domain.

Belongs to the ribonuclease III family. In terms of assembly, homodimer. It depends on Mg(2+) as a cofactor.

It localises to the cytoplasm. It catalyses the reaction Endonucleolytic cleavage to 5'-phosphomonoester.. Its function is as follows. Digests double-stranded RNA. Involved in the processing of primary rRNA transcript to yield the immediate precursors to the large and small rRNAs (23S and 16S). Processes some mRNAs, and tRNAs when they are encoded in the rRNA operon. Processes pre-crRNA and tracrRNA of type II CRISPR loci if present in the organism. This is Ribonuclease 3 from Chlorobium chlorochromatii (strain CaD3).